The chain runs to 337 residues: Palmitoyltransferase ZDHHC15 (337 aa).

Over 1–20 (MRRGWKMALSGGLRCCRRVL) the chain is Cytoplasmic. Residues 21-41 (SWVPVLVIVLVVLWSYYAYVF) form a helical membrane-spanning segment. The Lumenal segment spans residues 42-56 (ELCLVTVLSPAEKVI). A helical transmembrane segment spans residues 57 to 77 (YLILYHAIFVFFAWTYWKSIF). The Cytoplasmic portion of the chain corresponds to 78 to 172 (TLPQQPNQKF…NNCIGFSNYK (95 aa)). A DHHC domain is found at 129–179 (RFCDRCHLIKPDRCHHCSVCAMCVLKMDHHCPWVNNCIGFSNYKFFLQFLA). 7 residues coordinate Zn(2+): cysteine 131, cysteine 134, histidine 144, cysteine 145, cysteine 148, cysteine 151, and histidine 158. Residue cysteine 159 is the S-palmitoyl cysteine intermediate of the active site. Cysteine 165 lines the Zn(2+) pocket. Residues 173-193 (FFLQFLAYSVLYCLYIATTVF) traverse the membrane as a helical segment. Topologically, residues 194 to 210 (SYFIKYWRGELPSVRSK) are lumenal. Residues 211 to 234 (FHVLFLLFVACMFFVSLVILFGYH) traverse the membrane as a helical segment. Residues 235–337 (CWLVSRNKTT…LSSLAVESET (103 aa)) lie on the Cytoplasmic side of the membrane. Residues 293 to 337 (HSFPMRSMNESQNPLLANEEPWEDNEDESQDYPEGLSSLAVESET) form a disordered region. Over residues 312–323 (EPWEDNEDESQD) the composition is skewed to acidic residues.

Belongs to the DHHC palmitoyltransferase family. In terms of processing, autopalmitoylated (in vitro). As to expression, in brain, expressed in both excitatory and inhibitory neurons but not expressed by glial cells.

The protein localises to the golgi apparatus membrane. It is found in the postsynaptic density. It carries out the reaction L-cysteinyl-[protein] + hexadecanoyl-CoA = S-hexadecanoyl-L-cysteinyl-[protein] + CoA. It catalyses the reaction L-cysteinyl-[protein] + tetradecanoyl-CoA = S-tetradecanoyl-L-cysteinyl-[protein] + CoA. The catalysed reaction is L-cysteinyl-[protein] + octadecanoyl-CoA = S-octadecanoyl-L-cysteinyl-[protein] + CoA. In terms of biological role, palmitoyltransferase that catalyzes the addition of palmitate onto various protein substrates. Has no stringent fatty acid selectivity and in addition to palmitate can also transfer onto target proteins myristate from tetradecanoyl-CoA and stearate from octadecanoyl-CoA. Palmitoylates IGF2R and SORT1, promoting their partitioning to an endosomal membrane subdomain where they can interact with the retromer cargo-selective complex. Thereby, regulates retrograde transport from endosomes to the Golgi apparatus of these lysosomal sorting receptors and plays a role in trafficking of lysosomal proteins. In the nervous system, catalyzes the palmitoylation of DLG4/PSD95 and regulates its synaptic clustering and function in synaptogenesis. Could be involved in the differentiation of dopaminergic neurons and the development of the diencephalon. Could also catalyze the palmitoylation of GAP43. Could also palmitoylate DNAJC5 and regulate its localization to the Golgi membrane. Could also palmitoylate FYN as shown in vitro. May palmitoylate CALHM3 subunit of gustatory voltage-gated ion channels and modulate channel gating and kinetics. This chain is Palmitoyltransferase ZDHHC15, found in Rattus norvegicus (Rat).